The chain runs to 229 residues: 7-cyano-7-deazaguanine synthase (229 aa).

An ATP-binding site is contributed by F8–L18. Residues C186, C195, C198, and C201 each coordinate Zn(2+).

It belongs to the QueC family. Zn(2+) serves as cofactor.

It catalyses the reaction 7-carboxy-7-deazaguanine + NH4(+) + ATP = 7-cyano-7-deazaguanine + ADP + phosphate + H2O + H(+). It participates in purine metabolism; 7-cyano-7-deazaguanine biosynthesis. In terms of biological role, catalyzes the ATP-dependent conversion of 7-carboxy-7-deazaguanine (CDG) to 7-cyano-7-deazaguanine (preQ(0)). The sequence is that of 7-cyano-7-deazaguanine synthase from Edwardsiella ictaluri (strain 93-146).